The primary structure comprises 485 residues: ATP synthase subunit beta 2 (485 aa).

A compositionally biased stretch (basic and acidic residues) spans 1–10 (MSGMGEKSEQ). The tract at residues 1–27 (MSGMGEKSEQISKSARSTDPQEQESVA) is disordered. Over residues 11 to 24 (ISKSARSTDPQEQE) the composition is skewed to polar residues. 177–184 (GGAGVGKT) is a binding site for ATP.

It belongs to the ATPase alpha/beta chains family. As to quaternary structure, F-type ATPases have 2 components, CF(1) - the catalytic core - and CF(0) - the membrane proton channel. CF(1) has five subunits: alpha(3), beta(3), gamma(1), delta(1), epsilon(1). CF(0) has three main subunits: a(1), b(2) and c(9-12). The alpha and beta chains form an alternating ring which encloses part of the gamma chain. CF(1) is attached to CF(0) by a central stalk formed by the gamma and epsilon chains, while a peripheral stalk is formed by the delta and b chains.

The protein localises to the cell inner membrane. It carries out the reaction ATP + H2O + 4 H(+)(in) = ADP + phosphate + 5 H(+)(out). Its function is as follows. Produces ATP from ADP in the presence of a proton gradient across the membrane. The catalytic sites are hosted primarily by the beta subunits. The polypeptide is ATP synthase subunit beta 2 (Nitrosomonas eutropha (strain DSM 101675 / C91 / Nm57)).